The sequence spans 204 residues: Peptide deformylase (204 aa).

Fe cation is bound by residues Cys131 and His174. Glu175 is an active-site residue. His178 is a binding site for Fe cation.

The protein belongs to the polypeptide deformylase family. It depends on Fe(2+) as a cofactor.

The catalysed reaction is N-terminal N-formyl-L-methionyl-[peptide] + H2O = N-terminal L-methionyl-[peptide] + formate. Its function is as follows. Removes the formyl group from the N-terminal Met of newly synthesized proteins. Requires at least a dipeptide for an efficient rate of reaction. N-terminal L-methionine is a prerequisite for activity but the enzyme has broad specificity at other positions. The chain is Peptide deformylase from Streptococcus equi subsp. zooepidemicus (strain H70).